Here is an 896-residue protein sequence, read N- to C-terminus: NET1-associated nuclear protein 1 (896 aa).

WD repeat units follow at residues 295–334 (WHID…QQFL), 490–542 (LQDP…TNWN), 552–595 (GISV…SNWC), and 605–645 (NHFS…ESLE).

Interacts with snoRNA U3. Interacts with MPP10. Component of the ribosomal small subunit (SSU) processome composed of at least 40 protein subunits and snoRNA U3. In the absence of snoRNA3, forms a complex with other t-UTPs. This complex can associate with pre-18S ribosomal RNAs.

It is found in the nucleus. The protein localises to the nucleolus. Its function is as follows. Involved in nucleolar processing of pre-18S ribosomal RNA. Required for optimal pre-ribosomal RNA transcription by RNA polymerase I together with a subset of U3 proteins required for transcription (t-UTPs). This chain is NET1-associated nuclear protein 1 (NAN1), found in Saccharomyces cerevisiae (strain ATCC 204508 / S288c) (Baker's yeast).